The primary structure comprises 292 residues: Probable xyloglucan endotransglucosylase/hydrolase protein 6 (292 aa).

The N-terminal stretch at methionine 1 to alanine 30 is a signal peptide. In terms of domain architecture, GH16 spans arginine 31–tyrosine 224. Glutamate 110 acts as the Nucleophile in catalysis. Glutamate 114 acts as the Proton donor in catalysis. Glutamate 114 contacts xyloglucan. N-linked (GlcNAc...) asparagine glycosylation is present at asparagine 118. Xyloglucan-binding positions include glutamine 127–asparagine 129, aspartate 137–glutamate 139, aspartate 203–tryptophan 204, and glycine 208. 2 cysteine pairs are disulfide-bonded: cysteine 232/cysteine 240 and cysteine 277/cysteine 290. Arginine 282 lines the xyloglucan pocket.

It belongs to the glycosyl hydrolase 16 family. XTH group 1 subfamily. Post-translationally, contains at least one intrachain disulfide bond essential for its enzymatic activity.

It is found in the secreted. It localises to the cell wall. The protein localises to the extracellular space. Its subcellular location is the apoplast. The enzyme catalyses breaks a beta-(1-&gt;4) bond in the backbone of a xyloglucan and transfers the xyloglucanyl segment on to O-4 of the non-reducing terminal glucose residue of an acceptor, which can be a xyloglucan or an oligosaccharide of xyloglucan.. Catalyzes xyloglucan endohydrolysis (XEH) and/or endotransglycosylation (XET). Cleaves and religates xyloglucan polymers, an essential constituent of the primary cell wall, and thereby participates in cell wall construction of growing tissues. The sequence is that of Probable xyloglucan endotransglucosylase/hydrolase protein 6 (XTH6) from Arabidopsis thaliana (Mouse-ear cress).